Reading from the N-terminus, the 945-residue chain is Xylanolytic transcriptional activator xlnR (945 aa).

Residues 1–23 (MSTPSIPQFTSPFSPFSSGSHST) are compositionally biased toward low complexity. Disordered stretches follow at residues 1–33 (MSTP…TVGL) and 52–93 (DAAG…SGFR). Polar residues predominate over residues 63-72 (PSTSLRNSMS). A compositionally biased stretch (basic and acidic residues) spans 73–84 (HTKDQPPFDNEK). The zn(2)-C6 fungal-type DNA-binding region spans 125-151 (CDQCNQLRTKCDGQHPCAHCIEFGLTC). Disordered regions lie at residues 172–210 (AAAA…GTYD) and 559–601 (PPNV…INVT). A compositionally biased stretch (polar residues) spans 176 to 188 (TQGSNGHSGQANA). Basic and acidic residues predominate over residues 565 to 581 (ARQDGERDGDGEADKRH).

It belongs to the xlnR/xlr1 family.

The protein resides in the nucleus. Transcriptional activator of the xylanolytic system. Involved in the regulation of extracellular cellulolytic and xylanolytic genes and in the regulation of the intracellular activities of D-xylose catabolic genes in the pentose catabolic pathway (PCP) in response to the presence of D-xylose. Binds to the DNA sequence 5'-GGCTAAA-3'. In Aspergillus niger (strain ATCC MYA-4892 / CBS 513.88 / FGSC A1513), this protein is Xylanolytic transcriptional activator xlnR (xlnR).